The following is a 364-amino-acid chain: MGTRGPSAPVDTTPAKTIVVYRNGDPFYVGKKFVLSRRRAATFEALLEQLTEQVDVPFGVRRLFTPTRGHRVLGLDALQAGGKYVAAGRERFKELDYIHIVPRKPAKIRKLKEIKPVVHCDINVPSKWQTYHRISRHINVFTNGRLFIPPAKIIIPKFSLSDWDIVLATIGEKVFPLGGVRKLFTMNGHLLGDSKDLQDNHFYVAVGLETFKYFPYWKSPRVPSEVQQRYANVEKNSQRKKKVDSKGKEPCKYDGIPPKTQDSVYYAKEEKKKTLAEPLVQRGAEGDVYKAPTPSKETQGALDVKEEHNVQLEVPVDQRQAEIVKEDEEIHENTPDFEGNKDKEDARLCEDVERKMAREWKPVD.

2 consecutive Doublecortin domains span residues 16-98 (KTIV…LDYI) and 136-217 (RHIN…FPYW). The disordered stretch occupies residues 233–255 (VEKNSQRKKKVDSKGKEPCKYDG).

Expressed in testis and spermatozoa (at protein level).

It is found in the cell projection. Its subcellular location is the cilium. The protein localises to the flagellum. The protein resides in the cytoplasm. The polypeptide is Doublecortin domain-containing protein 2C (Homo sapiens (Human)).